The following is a 901-amino-acid chain: MLIPSKLSRPVRLDHTVVRERLLAKLSGANNFRLALITSPAGYGKTTLISQWAAGKNDIGWYSLDEGDNQQERFASYLIAAVQQATNGHCAICETMAQKRQYASLTSLFAQLFIELAEWHSPLYLVIDDYHLITNPVIHESMRFFIRHQPENLTLVVLSRNLPQLGIANLRVRDQLLEIGSQQLAFTHQEAKQFFDCRLSSPIEAAESSRICDDVSGWATALQLIALSARQNTHSAHKSARRLAGINASHLSDYLVDEVLDNVDLATRHFLLKSAILRSMNDALINRVTGEENGQMRLEEIERQGLFLQRMDDTGEWFCYHPLFGNFLRQRCQWELAAELPEIHRAAAESWMAQGFPSEAIHHALAAGDALMLRDILLNHAWSLFNHSELSLLEESLKALPWDSLLENPQLVLLQAWLMQSQHRYGEVNTLLARAEHEIKDIREGTMHAEFNALRAQVAINDGNPDEAERLAKLALEELPPGWFYSRIVATSVLGEVLHCKGELTRSLALMQQTEQMARQHDVWHYALWSLIQQSEILFAQGFLQTAWETQEKAFQLINEQHLEQLPMHEFLVRIRAQLLWAWARLDEAEASARSGIEVLSSYQPQQQLQCLAMLIQCSLARGDLDNARSQLNRLENLLGNGKYHSDWISNANKVRVIYWQMTGDKAAAANWLRHTAKPEFANNHFLQGQWRNIARAQILLGEFEPAEIVLEELNENARSLRLMSDLNRNLLLLNQLYWQAGRKSDAQRVLLDALKLANRTGFISHFVIEGEAMAQQLRQLIQLNTLPELEQHRAQRILREINQHHRHKFAHFDENFVERLLNHPEVPELIRTSPLTQREWQVLGLIYSGYSNEQIAGELEVAATTIKTHIRNLYQKLGVAHRQAAVQHAQKLLKMMGYGV.

39 to 46 (SPAGYGKT) contacts ATP. In terms of domain architecture, HTH luxR-type spans 829–894 (ELIRTSPLTQ…AAVQHAQKLL (66 aa)). Positions 853–872 (NEQIAGELEVAATTIKTHIR) form a DNA-binding region, H-T-H motif.

This sequence belongs to the MalT family. In terms of assembly, monomer in solution. Oligomerizes to an active state in the presence of the positive effectors ATP and maltotriose.

Its activity is regulated as follows. Activated by ATP and maltotriose, which are both required for DNA binding. Its function is as follows. Positively regulates the transcription of the maltose regulon whose gene products are responsible for uptake and catabolism of malto-oligosaccharides. Specifically binds to the promoter region of its target genes, recognizing a short DNA motif called the MalT box. This Escherichia coli O7:K1 (strain IAI39 / ExPEC) protein is HTH-type transcriptional regulator MalT.